The chain runs to 332 residues: 2,3-diketo-L-gulonate reductase (332 aa).

His-44 serves as the catalytic Proton donor. Residues 168–174 (ITMVDMS), 224–225 (WK), and 304–306 (GHE) contribute to the NAD(+) site.

It belongs to the LDH2/MDH2 oxidoreductase family. DlgD subfamily. In terms of assembly, homodimer.

The protein resides in the cytoplasm. It catalyses the reaction 3-dehydro-L-gulonate + NAD(+) = 2,3-dioxo-L-gulonate + NADH + H(+). The catalysed reaction is 3-dehydro-L-gulonate + NADP(+) = 2,3-dioxo-L-gulonate + NADPH + H(+). Its function is as follows. Catalyzes the reduction of 2,3-diketo-L-gulonate in the presence of NADH, to form 3-keto-L-gulonate. The sequence is that of 2,3-diketo-L-gulonate reductase from Escherichia fergusonii (strain ATCC 35469 / DSM 13698 / CCUG 18766 / IAM 14443 / JCM 21226 / LMG 7866 / NBRC 102419 / NCTC 12128 / CDC 0568-73).